Reading from the N-terminus, the 367-residue chain is sn-glycerol-3-phosphate import ATP-binding protein UgpC (367 aa).

Residues 4–235 enclose the ABC transporter domain; sequence LSLRNVQKTY…PASTFVAGFI (232 aa). An ATP-binding site is contributed by 37 to 44; it reads GPSGCGKS.

This sequence belongs to the ABC transporter superfamily. sn-glycerol-3-phosphate importer (TC 3.A.1.1.3) family. As to quaternary structure, the complex is composed of two ATP-binding proteins (UgpC), two transmembrane proteins (UgpA and UgpE) and a solute-binding protein (UgpB).

Its subcellular location is the cell inner membrane. The catalysed reaction is sn-glycerol 3-phosphate(out) + ATP + H2O = sn-glycerol 3-phosphate(in) + ADP + phosphate + H(+). Part of the ABC transporter complex UgpBAEC involved in sn-glycerol-3-phosphate (G3P) import. Responsible for energy coupling to the transport system. This chain is sn-glycerol-3-phosphate import ATP-binding protein UgpC, found in Cupriavidus metallidurans (strain ATCC 43123 / DSM 2839 / NBRC 102507 / CH34) (Ralstonia metallidurans).